Here is a 119-residue protein sequence, read N- to C-terminus: Ribosome-binding factor A (119 aa).

The protein belongs to the RbfA family. In terms of assembly, monomer. Binds 30S ribosomal subunits, but not 50S ribosomal subunits or 70S ribosomes.

It is found in the cytoplasm. In terms of biological role, one of several proteins that assist in the late maturation steps of the functional core of the 30S ribosomal subunit. Associates with free 30S ribosomal subunits (but not with 30S subunits that are part of 70S ribosomes or polysomes). Required for efficient processing of 16S rRNA. May interact with the 5'-terminal helix region of 16S rRNA. This Mycoplasmoides gallisepticum (strain R(low / passage 15 / clone 2)) (Mycoplasma gallisepticum) protein is Ribosome-binding factor A.